The chain runs to 490 residues: Cytochrome P450 2C7 (490 aa).

At arginine 144 the chain carries Dimethylated arginine. Position 435 (cysteine 435) interacts with heme.

Belongs to the cytochrome P450 family. It depends on heme as a cofactor.

It localises to the endoplasmic reticulum membrane. The protein resides in the microsome membrane. It catalyses the reaction an organic molecule + reduced [NADPH--hemoprotein reductase] + O2 = an alcohol + oxidized [NADPH--hemoprotein reductase] + H2O + H(+). Cytochromes P450 are a group of heme-thiolate monooxygenases. In liver microsomes, this enzyme is involved in an NADPH-dependent electron transport pathway. It oxidizes a variety of structurally unrelated compounds, including steroids, fatty acids, and xenobiotics. The chain is Cytochrome P450 2C7 (Cyp2c7) from Rattus norvegicus (Rat).